A 279-amino-acid chain; its full sequence is Thymidylate synthase 1 (279 aa).

Position 141 to 142 (141 to 142 (RR)) interacts with dUMP. The active-site Nucleophile is the Cys161. Residues 181–184 (RSND), Asn192, and 222–224 (HVY) each bind dUMP. (6R)-5,10-methylene-5,6,7,8-tetrahydrofolate is bound at residue Asp184. Ala278 contacts (6R)-5,10-methylene-5,6,7,8-tetrahydrofolate.

It belongs to the thymidylate synthase family. Bacterial-type ThyA subfamily. Homodimer.

It is found in the cytoplasm. The catalysed reaction is dUMP + (6R)-5,10-methylene-5,6,7,8-tetrahydrofolate = 7,8-dihydrofolate + dTMP. The protein operates within pyrimidine metabolism; dTTP biosynthesis. Its function is as follows. Catalyzes the reductive methylation of 2'-deoxyuridine-5'-monophosphate (dUMP) to 2'-deoxythymidine-5'-monophosphate (dTMP) while utilizing 5,10-methylenetetrahydrofolate (mTHF) as the methyl donor and reductant in the reaction, yielding dihydrofolate (DHF) as a by-product. This enzymatic reaction provides an intracellular de novo source of dTMP, an essential precursor for DNA biosynthesis. The chain is Thymidylate synthase 1 from Bacillus spizizenii (strain ATCC 23059 / NRRL B-14472 / W23) (Bacillus subtilis subsp. spizizenii).